A 1487-amino-acid polypeptide reads, in one-letter code: Adhesion G protein-coupled receptor L2 (1487 aa).

A signal peptide spans 1–25 (MVSSGCRMRSLWFIIIISFSPSTEG). The Extracellular portion of the chain corresponds to 26 to 855 (FSRAALPFGL…VHHLLLTVIT (830 aa)). The 90-residue stretch at 41–130 (SCEGYSIDLR…KYLEVQYECV (90 aa)) folds into the SUEL-type lectin domain. An N-linked (GlcNAc...) asparagine glycan is attached at Asn99. The 260-residue stretch at 139 to 398 (VCPGTLKAIV…ILRYSLEFGP (260 aa)) folds into the Olfactomedin-like domain. Over residues 423 to 439 (STTSSASQRGPVSSTAA) the composition is skewed to polar residues. Residues 423-461 (STTSSASQRGPVSSTAAGPQDGSRGTKPPPAVSTTKIPP) form a disordered region. Asn524 and Asn735 each carry an N-linked (GlcNAc...) asparagine glycan. Residues 663 to 841 (TRVSMPTENI…AILMAHREIA (179 aa)) enclose the GAIN-B domain. 2 disulfide bridges follow: Cys792/Cys823 and Cys811/Cys825. A GPS region spans residues 792–841 (CSFWNYSERTMMGYWSTQGCKLVDTNKTRTTCACSHLTNFAILMAHREIA). The tract at residues 829-841 (TNFAILMAHREIA) is stachel. A helical transmembrane segment spans residues 856-876 (WVGIVVSLVCLAICIFTFCFF). The Cytoplasmic portion of the chain corresponds to 877–884 (RGLQSDRN). Residues 885-905 (TIHKNLCINLFIAEFIFLIGI) traverse the membrane as a helical segment. The Extracellular portion of the chain corresponds to 906-911 (DKTKYT). Residues 912–932 (IACPVFAGLLHFFFLAAFSWM) form a helical membrane-spanning segment. The Cytoplasmic portion of the chain corresponds to 933-955 (CLEGVQLYLMLVEVFESEYSRKK). The helical transmembrane segment at 956–976 (YYYVAGYLFPATVVGVSAAID) threads the bilayer. The Extracellular segment spans residues 977–994 (YKSYGTVQACWLHVDNYF). The chain crosses the membrane as a helical span at residues 995–1015 (IWSFIGPVTFIILLNIIFLVI). At 1016–1064 (TLCKMVKHSNTLKPDSSRLENINNYRVCDGYYNTDLPGYEDNKPFIKSW) the chain is on the cytoplasmic side. A helical membrane pass occupies residues 1065–1085 (VLGAFALLCLLGLTWSFGLLF). Over 1086 to 1090 (VNEET) the chain is Extracellular. Residues 1091 to 1111 (VVMAYLFTAFNAFQGLFIFIF) form a helical membrane-spanning segment. The tract at residues 1386–1430 (EADDHLQSPNRDSLYTSMPNLRDSPYPESSPDMAEDLSPSRRSEN) is disordered. Residues 1392–1404 (QSPNRDSLYTSMP) show a composition bias toward polar residues. 3 positions are modified to phosphoserine: Ser1402, Ser1437, and Ser1458.

This sequence belongs to the G-protein coupled receptor 2 family. Adhesion G-protein coupled receptor (ADGR) subfamily. As to quaternary structure, heterodimer of 2 chains generated by proteolytic processing; the large extracellular N-terminal fragment and the membrane-bound C-terminal fragment predominantly remain associated and non-covalently linked. In terms of processing, autoproteolytically processed at the GPS region of the GAIN-B domain; this cleavage modulates receptor activity. As to expression, ubiquitously expressed. In neurons, specifically localizes to dendritic domains of CA1 pyramidal neurons in the S. lacunosummoleculare.

Its subcellular location is the postsynaptic cell membrane. Forms a heterodimer of 2 chains generated by proteolytic processing that remain associated through non-covalent interactions mediated by the GAIN-B domain. In the inactivated receptor, the Stachel sequence (also named stalk) is embedded in the GAIN-B domain, where it adopts a beta-strand conformation. On activation, the Stachel moves into the 7 transmembrane region and adopts a twisted hook-shaped configuration that forms contacts within the receptor, leading to coupling of a G-alpha protein, which activates signaling. The cleaved GAIN-B and N-terminal domains can then dissociate from the rest of the receptor. Orphan adhesion G-protein coupled receptor (aGPCR), which mediates synapse specificity. Ligand binding causes a conformation change that triggers signaling via guanine nucleotide-binding proteins (G proteins) and modulates the activity of downstream effectors. Following G-protein coupled receptor activation, associates with cell adhesion molecules that are expressed at the surface of adjacent cells to direct synapse specificity. Specifically mediates the establishment of perforant-path synapses on CA1-region pyramidal neurons in the hippocampus. Localizes to postsynaptic spines in excitatory synapses in the S.lacunosum-moleculare and interacts with presynaptic cell adhesion molecules, such as teneurins, promoting synapse formation. The sequence is that of Adhesion G protein-coupled receptor L2 from Mus musculus (Mouse).